The following is a 151-amino-acid chain: Small ribosomal subunit protein uS15 (151 aa).

Belongs to the universal ribosomal protein uS15 family.

In Pisum sativum (Garden pea), this protein is Small ribosomal subunit protein uS15 (RPS13).